The sequence spans 428 residues: Serine--tRNA ligase (428 aa).

231 to 233 (TAE) serves as a coordination point for L-serine. ATP-binding positions include 262–264 (RRE) and Val-278. Residue Glu-285 participates in L-serine binding. ATP is bound at residue 349 to 352 (EVSS). Ser-384 lines the L-serine pocket.

Belongs to the class-II aminoacyl-tRNA synthetase family. Type-1 seryl-tRNA synthetase subfamily. As to quaternary structure, homodimer. The tRNA molecule binds across the dimer.

The protein localises to the cytoplasm. The enzyme catalyses tRNA(Ser) + L-serine + ATP = L-seryl-tRNA(Ser) + AMP + diphosphate + H(+). It catalyses the reaction tRNA(Sec) + L-serine + ATP = L-seryl-tRNA(Sec) + AMP + diphosphate + H(+). The protein operates within aminoacyl-tRNA biosynthesis; selenocysteinyl-tRNA(Sec) biosynthesis; L-seryl-tRNA(Sec) from L-serine and tRNA(Sec): step 1/1. In terms of biological role, catalyzes the attachment of serine to tRNA(Ser). Is also able to aminoacylate tRNA(Sec) with serine, to form the misacylated tRNA L-seryl-tRNA(Sec), which will be further converted into selenocysteinyl-tRNA(Sec). This Chlamydia muridarum (strain MoPn / Nigg) protein is Serine--tRNA ligase.